Consider the following 409-residue polypeptide: uncharacterized protein (409 aa).

The next 10 helical transmembrane spans lie at Ala18 to Val38, Gly47 to Gly67, Val100 to Ile120, Val159 to Tyr179, Ala180 to Leu200, Phe232 to Leu252, Gly260 to Leu280, Ile302 to Gly322, Gly355 to Leu375, and Ile380 to Ala400.

The protein resides in the cell membrane. This is an uncharacterized protein from Mycobacterium tuberculosis (strain CDC 1551 / Oshkosh).